The chain runs to 388 residues: Ovalbumin-related protein Y (388 aa).

A disulfide bridge links Cys74 with Cys121. N-linked (GlcNAc...) asparagine glycans are attached at residues Asn95, Asn215, Asn293, and Asn312.

It belongs to the serpin family. Ov-serpin subfamily. Post-translationally, N-glycosylated on at least two Asn residues by ovomucoid type carbohydrate units. In terms of processing, the N-terminus is blocked. Major protein of egg white. Expressed in the magnum of the oviduct (at protein level).

It localises to the secreted. This chain is Ovalbumin-related protein Y (SERPINB14B), found in Gallus gallus (Chicken).